A 398-amino-acid chain; its full sequence is Na(+)/H(+) antiporter NhaA 2 (398 aa).

Transmembrane regions (helical) follow at residues 17–37 (ILLMLAVAMAMLLANSPLAGL), 59–79 (LLLWVNDGLMALFFLLIGLEV), 95–115 (SLPTFAAIGGMVFPALVYLGF), 125–145 (GWAIPAATDIAFALGVLALLG), 154–174 (VFLLALAIIDDIGVIVIIALF), 179–199 (LSITSLVIAAIAIGSMVILNL), 213–233 (LLLWIAVLKSGVHATLAGVVI), 262–282 (FMILPLFAFANAGLSLSGMSL), 288–308 (PAALGVMLGLLLGKPLGVLLF), 331–351 (AVAVLCGVGFTMSIFISSLAF), and 364–384 (LGTLVGSMLSASIAYFWLTKV).

It belongs to the NhaA Na(+)/H(+) (TC 2.A.33) antiporter family.

It is found in the cell inner membrane. The catalysed reaction is Na(+)(in) + 2 H(+)(out) = Na(+)(out) + 2 H(+)(in). Functionally, na(+)/H(+) antiporter that extrudes sodium in exchange for external protons. In Shewanella denitrificans (strain OS217 / ATCC BAA-1090 / DSM 15013), this protein is Na(+)/H(+) antiporter NhaA 2.